Reading from the N-terminus, the 392-residue chain is Selenide, water dikinase 1 (392 aa).

Ser2 carries the N-acetylserine modification. Cys31 is a catalytic residue. ATP contacts are provided by residues Lys32, 67-69, Asp87, Asp110, and 161-164; these read GMD and GGQT. Asp69 serves as a coordination point for Mg(2+). Asp110 provides a ligand contact to Mg(2+). A Mg(2+)-binding site is contributed by Asp265.

It belongs to the selenophosphate synthase 1 family. Class II subfamily. Homodimer. Heterodimer with isoform 3. In terms of assembly, homodimer. Heterodimer with isoform 4. As to quaternary structure, homodimer. Heterodimer with isoform 1. Homodimer. Heterodimer with isoform 2. The cofactor is Mg(2+). Gradually expressed during the cell cycle until G2/M phase and then decreases. In terms of tissue distribution, gradually expressed during the cell cycle until S phase and then decreases.

Its subcellular location is the cell membrane. The protein localises to the nucleus membrane. It is found in the cytoplasm. It carries out the reaction hydrogenselenide + ATP + H2O = selenophosphate + AMP + phosphate + 2 H(+). Its activity is regulated as follows. Activated by phosphate ions and by potassium ions. Synthesizes selenophosphate from selenide and ATP. The protein is Selenide, water dikinase 1 (SEPHS1) of Homo sapiens (Human).